The primary structure comprises 321 residues: Ferredoxin--NADP reductase (321 aa).

FAD is bound by residues Glu33, Gln41, Tyr46, Val86, Leu119, Asp277, and Ser318.

The protein belongs to the ferredoxin--NADP reductase type 2 family. Homodimer. It depends on FAD as a cofactor.

The enzyme catalyses 2 reduced [2Fe-2S]-[ferredoxin] + NADP(+) + H(+) = 2 oxidized [2Fe-2S]-[ferredoxin] + NADPH. This is Ferredoxin--NADP reductase from Lactococcus lactis subsp. cremoris (strain MG1363).